The chain runs to 82 residues: Quinohemoprotein amine dehydrogenase subunit gamma (82 aa).

The segment at residues 7-16 (CTTSFDPGWE) is a cross-link (4-cysteinyl-glutamic acid (Cys-Glu)). Cross-links (3-cysteinyl-aspartic acid (Cys-Asp)) lie at residues 27–33 (CQPMEAD) and 41–49 (CWWPAQVAD). Asp-33 functions as the Proton acceptor in the catalytic mechanism. Positions 37 to 43 (CADPCWW) form a cross-link, 4'-cysteinyl-tryptophylquinone (Cys-Trp). Position 43 is a tryptophylquinone (Trp-43).

Belongs to the quinohemoprotein amine dehydrogenase subunit gamma family. As to quaternary structure, heterotrimer of an alpha, a beta and a gamma subunit. Cysteine tryptophylquinone residue serves as cofactor. In terms of processing, the cysteine tryptophylquinone (CTQ) is generated by oxidation of the indole ring of a tryptophan residue to form tryptophylquinone, followed by covalent cross-linking with a cysteine residue.

It is found in the periplasm. The catalysed reaction is 2 Fe(III)-[cytochrome c550] + an aliphatic amine + H2O = 2 Fe(II)-[cytochrome c550] + an aldehyde + NH4(+) + 2 H(+). With respect to regulation, inhibited by carbonyl reagents such as hydrazine, hydroxylamine, phenylhydrazine and semicarbazide. Its function is as follows. Catalyzes the oxidative deamination of a wide range of primary aliphatic and aromatic amines. The physiological electron acceptor is the constitutive cytochrome c550. In Paracoccus denitrificans, this protein is Quinohemoprotein amine dehydrogenase subunit gamma (qhnDH).